The following is a 321-amino-acid chain: Lipoyl synthase (321 aa).

C68, C73, C79, C94, C98, C101, and S308 together coordinate [4Fe-4S] cluster. Residues F80–T297 enclose the Radical SAM core domain.

Belongs to the radical SAM superfamily. Lipoyl synthase family. [4Fe-4S] cluster serves as cofactor.

It is found in the cytoplasm. It catalyses the reaction [[Fe-S] cluster scaffold protein carrying a second [4Fe-4S](2+) cluster] + N(6)-octanoyl-L-lysyl-[protein] + 2 oxidized [2Fe-2S]-[ferredoxin] + 2 S-adenosyl-L-methionine + 4 H(+) = [[Fe-S] cluster scaffold protein] + N(6)-[(R)-dihydrolipoyl]-L-lysyl-[protein] + 4 Fe(3+) + 2 hydrogen sulfide + 2 5'-deoxyadenosine + 2 L-methionine + 2 reduced [2Fe-2S]-[ferredoxin]. The protein operates within protein modification; protein lipoylation via endogenous pathway; protein N(6)-(lipoyl)lysine from octanoyl-[acyl-carrier-protein]: step 2/2. Catalyzes the radical-mediated insertion of two sulfur atoms into the C-6 and C-8 positions of the octanoyl moiety bound to the lipoyl domains of lipoate-dependent enzymes, thereby converting the octanoylated domains into lipoylated derivatives. This chain is Lipoyl synthase, found in Aliivibrio fischeri (strain MJ11) (Vibrio fischeri).